A 337-amino-acid polypeptide reads, in one-letter code: Protein RecA (337 aa).

Residue 66–73 (GPESSGKT) coordinates ATP.

Belongs to the RecA family.

Its subcellular location is the cytoplasm. In terms of biological role, can catalyze the hydrolysis of ATP in the presence of single-stranded DNA, the ATP-dependent uptake of single-stranded DNA by duplex DNA, and the ATP-dependent hybridization of homologous single-stranded DNAs. It interacts with LexA causing its activation and leading to its autocatalytic cleavage. The polypeptide is Protein RecA (Mesomycoplasma hyopneumoniae (strain 232) (Mycoplasma hyopneumoniae)).